Here is a 78-residue protein sequence, read N- to C-terminus: Acyl carrier protein (78 aa).

The region spanning 2–77 (SDTADRVQKI…DATKYIEEHK (76 aa)) is the Carrier domain. An O-(pantetheine 4'-phosphoryl)serine modification is found at S37.

The protein belongs to the acyl carrier protein (ACP) family. 4'-phosphopantetheine is transferred from CoA to a specific serine of apo-ACP by AcpS. This modification is essential for activity because fatty acids are bound in thioester linkage to the sulfhydryl of the prosthetic group.

The protein localises to the cytoplasm. It functions in the pathway lipid metabolism; fatty acid biosynthesis. Its function is as follows. Carrier of the growing fatty acid chain in fatty acid biosynthesis. The protein is Acyl carrier protein of Erythrobacter litoralis (strain HTCC2594).